The chain runs to 264 residues: Virulence plasmid ParA family protein pGP5-D (264 aa).

9-16 serves as a coordination point for ATP; it reads FKGGTGKT.

The protein belongs to the ParA family.

In terms of biological role, required for growth within mammalian cells. This chain is Virulence plasmid ParA family protein pGP5-D, found in Chlamydia trachomatis.